A 448-amino-acid chain; its full sequence is High mobility group B protein 15 (448 aa).

The region spanning 29 to 120 (VADPRLFMTS…LLNNYEQIYF (92 aa)) is the ARID domain. The segment covering 219-236 (PQQSHGVLPNTLNISANP) has biased composition (polar residues). Disordered stretches follow at residues 219 to 270 (PQQS…RSGY), 333 to 352 (KKNGQLISNAVPLQQRLPEQ), and 366 to 448 (VEED…AEQN). The segment covering 244–255 (TKRRRRRKKSEI) has biased composition (basic residues). Positions 263 to 330 (PKPNRSGYNF…RYRTEMEDYR (68 aa)) form a DNA-binding region, HMG box. Residues 389 to 398 (SIETDPELEE) are compositionally biased toward acidic residues. The span at 399 to 412 (PSLNPSGPNLNPNP) shows a compositional bias: low complexity.

This sequence belongs to the HMGB family.

Its subcellular location is the nucleus. Functionally, binds preferentially DNA with A/T-rich content. The protein is High mobility group B protein 15 (HMGB15) of Arabidopsis thaliana (Mouse-ear cress).